The sequence spans 252 residues: MSSVTMRDMLKAGVHFGHQTRYWNPKMNTYIFGARNKIHIINLEQTLPLFNDAMAFLNKLAASNNKILFVGTKRAAQKAVSEEAQRCGMPYVDHRWLGGMLTNWKTIRQSIKRYRELEAQFQDGTFDKLTKKEALMRKREMDKLERSIGGIKDMGGLPDALFVIDVDHEDIALQEARKLGIPVVAVVDTNSNPDGVDYVIPGNDDAIRAIQLYVKAAADVILEGKQYAQNQTGGESEFVEVADEAAGEKAEG.

Belongs to the universal ribosomal protein uS2 family.

This chain is Small ribosomal subunit protein uS2, found in Alcanivorax borkumensis (strain ATCC 700651 / DSM 11573 / NCIMB 13689 / SK2).